The primary structure comprises 192 residues: GTP cyclohydrolase-2 (192 aa).

50–54 is a GTP binding site; sequence RLHSE. 3 residues coordinate Zn(2+): C55, C66, and C68. GTP is bound by residues 92-94 and T114; that span reads EGR. D126 (proton acceptor) is an active-site residue. Catalysis depends on R128, which acts as the Nucleophile. Positions 149 and 154 each coordinate GTP.

It belongs to the GTP cyclohydrolase II family. Requires Zn(2+) as cofactor.

The catalysed reaction is GTP + 4 H2O = 2,5-diamino-6-hydroxy-4-(5-phosphoribosylamino)-pyrimidine + formate + 2 phosphate + 3 H(+). The protein operates within cofactor biosynthesis; riboflavin biosynthesis; 5-amino-6-(D-ribitylamino)uracil from GTP: step 1/4. In terms of biological role, catalyzes the conversion of GTP to 2,5-diamino-6-ribosylamino-4(3H)-pyrimidinone 5'-phosphate (DARP), formate and pyrophosphate. This Helicobacter acinonychis (strain Sheeba) protein is GTP cyclohydrolase-2.